Consider the following 864-residue polypeptide: Probable M1 family aminopeptidase 2 (864 aa).

Substrate contacts are provided by residues glutamate 149 and 289-293; that span reads GAMEN. Residue histidine 325 coordinates Zn(2+). The Proton acceptor role is filled by glutamate 326. Zn(2+) is bound by residues histidine 329 and glutamate 348.

It belongs to the peptidase M1 family. It depends on Zn(2+) as a cofactor.

The sequence is that of Probable M1 family aminopeptidase 2 from Encephalitozoon cuniculi (strain GB-M1) (Microsporidian parasite).